A 166-amino-acid polypeptide reads, in one-letter code: Ribosome maturation factor RimP (166 aa).

Belongs to the RimP family.

It localises to the cytoplasm. Its function is as follows. Required for maturation of 30S ribosomal subunits. The chain is Ribosome maturation factor RimP from Paramagnetospirillum magneticum (strain ATCC 700264 / AMB-1) (Magnetospirillum magneticum).